Here is a 150-residue protein sequence, read N- to C-terminus: FAD synthase (150 aa).

ATP contacts are provided by residues 10–11 (VF), 15–18 (HPGH), Asp97, and Tyr124.

The protein belongs to the archaeal FAD synthase family. Homodimer. The cofactor is a divalent metal cation.

The enzyme catalyses FMN + ATP + H(+) = FAD + diphosphate. It functions in the pathway cofactor biosynthesis; FAD biosynthesis; FAD from FMN: step 1/1. In terms of biological role, catalyzes the transfer of the AMP portion of ATP to flavin mononucleotide (FMN) to produce flavin adenine dinucleotide (FAD) coenzyme. The sequence is that of FAD synthase from Methanopyrus kandleri (strain AV19 / DSM 6324 / JCM 9639 / NBRC 100938).